The primary structure comprises 141 residues: Organic hydroperoxide resistance protein OhrA (141 aa).

The protein belongs to the OsmC/Ohr family.

Its function is as follows. Involved in organic hydroperoxide resistance. The protein is Organic hydroperoxide resistance protein OhrA (ohrA) of Bacillus subtilis (strain 168).